The chain runs to 203 residues: LexA repressor (203 aa).

Positions 30–50 form a DNA-binding region, H-T-H motif; the sequence is VREICQAVSLKSTSTVHGHLK. Catalysis depends on for autocatalytic cleavage activity residues Ser127 and Lys164.

It belongs to the peptidase S24 family. Homodimer.

The enzyme catalyses Hydrolysis of Ala-|-Gly bond in repressor LexA.. Functionally, represses a number of genes involved in the response to DNA damage (SOS response), including recA and lexA. In the presence of single-stranded DNA, RecA interacts with LexA causing an autocatalytic cleavage which disrupts the DNA-binding part of LexA, leading to derepression of the SOS regulon and eventually DNA repair. The chain is LexA repressor from Clostridium perfringens (strain ATCC 13124 / DSM 756 / JCM 1290 / NCIMB 6125 / NCTC 8237 / Type A).